The sequence spans 93 residues: Cell division protein FtsB (93 aa).

The Cytoplasmic segment spans residues 1–3; the sequence is MRI. Residues 4-21 form a helical membrane-spanning segment; the sequence is FVIALTLLFGWLQYTLWF. Topologically, residues 22 to 93 are periplasmic; the sequence is GKNGVSDYYT…FYRIVDEEEH (72 aa). A coiled-coil region spans residues 31-75; sequence TVEDEIEVQQQVNSKLQARNNEMFAEIDDLRQGLDAIEERARHEL.

Belongs to the FtsB family. In terms of assembly, part of a complex composed of FtsB, FtsL and FtsQ.

Its subcellular location is the cell inner membrane. Essential cell division protein. May link together the upstream cell division proteins, which are predominantly cytoplasmic, with the downstream cell division proteins, which are predominantly periplasmic. The protein is Cell division protein FtsB of Vibrio campbellii (strain ATCC BAA-1116).